A 181-amino-acid polypeptide reads, in one-letter code: Large ribosomal subunit protein uL6 (181 aa).

It belongs to the universal ribosomal protein uL6 family. As to quaternary structure, part of the 50S ribosomal subunit.

Its function is as follows. This protein binds to the 23S rRNA, and is important in its secondary structure. It is located near the subunit interface in the base of the L7/L12 stalk, and near the tRNA binding site of the peptidyltransferase center. This is Large ribosomal subunit protein uL6 from Lawsonia intracellularis (strain PHE/MN1-00).